A 591-amino-acid polypeptide reads, in one-letter code: Aspartate--tRNA(Asp/Asn) ligase (591 aa).

L-aspartate is bound at residue E175. The aspartate stretch occupies residues 199–202 (QQFK). L-aspartate-binding residues include R221 and H453. Residue 221-223 (RDE) participates in ATP binding. Position 486 (E486) interacts with ATP. R493 contacts L-aspartate. An ATP-binding site is contributed by 538–541 (GIDR).

The protein belongs to the class-II aminoacyl-tRNA synthetase family. Type 1 subfamily. Homodimer.

It localises to the cytoplasm. The enzyme catalyses tRNA(Asx) + L-aspartate + ATP = L-aspartyl-tRNA(Asx) + AMP + diphosphate. Aspartyl-tRNA synthetase with relaxed tRNA specificity since it is able to aspartylate not only its cognate tRNA(Asp) but also tRNA(Asn). Reaction proceeds in two steps: L-aspartate is first activated by ATP to form Asp-AMP and then transferred to the acceptor end of tRNA(Asp/Asn). In Jannaschia sp. (strain CCS1), this protein is Aspartate--tRNA(Asp/Asn) ligase.